A 314-amino-acid chain; its full sequence is 2,3-dihydroxyphenylpropionate/2,3-dihydroxicinnamic acid 1,2-dioxygenase (314 aa).

Residue His115 is the Proton donor of the active site. Catalysis depends on His179, which acts as the Proton acceptor.

The protein belongs to the LigB/MhpB extradiol dioxygenase family. In terms of assembly, homotetramer. It depends on Fe(2+) as a cofactor.

It catalyses the reaction 3-(2,3-dihydroxyphenyl)propanoate + O2 = (2Z,4E)-2-hydroxy-6-oxonona-2,4-dienedioate + H(+). The catalysed reaction is (2E)-3-(2,3-dihydroxyphenyl)prop-2-enoate + O2 = (2Z,4E,7E)-2-hydroxy-6-oxonona-2,4,7-trienedioate + H(+). Its pathway is aromatic compound metabolism; 3-phenylpropanoate degradation. Its function is as follows. Catalyzes the non-heme iron(II)-dependent oxidative cleavage of 2,3-dihydroxyphenylpropionic acid and 2,3-dihydroxicinnamic acid into 2-hydroxy-6-ketononadienedioate and 2-hydroxy-6-ketononatrienedioate, respectively. The sequence is that of 2,3-dihydroxyphenylpropionate/2,3-dihydroxicinnamic acid 1,2-dioxygenase from Escherichia coli (strain 55989 / EAEC).